Here is a 747-residue protein sequence, read N- to C-terminus: Kinesin-like protein KIF3B (747 aa).

Position 1 is an N-acetylmethionine (Met1). Ser2 is subject to N-acetylserine; in Kinesin-like protein KIF3B, N-terminally processed. Residues 9 to 340 (SVRVVVRCRP…LRYANRAKNI (332 aa)) enclose the Kinesin motor domain. 96-103 (GQTGTGKT) lines the ATP pocket. Residues 346 to 579 (VNEDPKDALL…EQTQNELTRE (234 aa)) are a coiled coil. Disordered stretches follow at residues 374–412 (IGRR…DKDD) and 699–747 (QVDA…LVPK). A compositionally biased stretch (acidic residues) spans 393–411 (GEEEEEEGEEGEEEGDDKD). The interval 580-747 (LKLKHLIIEN…YPQSRGLVPK (168 aa)) is globular. Positions 701–710 (DASSFESTAN) are enriched in polar residues. A compositionally biased stretch (basic residues) spans 711-721 (KKSKARPKSGR). Residues 722-735 (KSGSSSSSSGTPAS) are compositionally biased toward low complexity.

Belongs to the TRAFAC class myosin-kinesin ATPase superfamily. Kinesin family. Kinesin II subfamily. Heterodimer of KIF3A and KIF3B. KIF3A/KIF3B heterodimer interacts with KIFAP3 forming a heterotrimeric (KIF3A/KIF3B/KIFAP3) complex. Interacts directly with IFT20. Interacts with the SMC3 subunit of the cohesin complex. Interacts with FLCN.

Its subcellular location is the cytoplasm. It is found in the cytoskeleton. The protein localises to the cell projection. It localises to the cilium. The protein resides in the dendritic spine. Microtubule-based molecular motor that transport intracellular cargos, such as vesicles, organelles and protein complexes. Uses ATP hydrolysis to generate force to bind and move along the microtubule. Plays a role in cilia formation. Involved in photoreceptor integrity and opsin trafficking in rod photoreceptors. Transports vesicles containing N-methyl-D-aspartate (NMDA) receptor subunit GRIN2A into neuronal dendrites. This Homo sapiens (Human) protein is Kinesin-like protein KIF3B (KIF3B).